A 325-amino-acid polypeptide reads, in one-letter code: Cytochrome c biogenesis protein CcsA (325 aa).

A run of 8 helical transmembrane segments spans residues 12-32, 45-65, 72-92, 100-120, 145-165, 231-251, 264-281, and 293-313; these read HISF…LLFV, GMII…VFSG, LYES…VPYF, LNTI…SGLL, MILG…ILVI, TISL…VWAN, ETWA…LHTR, and IVAS…NLLG.

The protein belongs to the CcmF/CycK/Ccl1/NrfE/CcsA family. May interact with Ccs1.

It localises to the plastid. The protein resides in the chloroplast thylakoid membrane. Required during biogenesis of c-type cytochromes (cytochrome c6 and cytochrome f) at the step of heme attachment. The chain is Cytochrome c biogenesis protein CcsA from Glycine max (Soybean).